The chain runs to 126 residues: Apolipoprotein C-IV (126 aa).

The signal sequence occupies residues methionine 1–cysteine 27.

It belongs to the apolipoprotein C4 family.

The protein localises to the secreted. Its function is as follows. May participate in lipoprotein metabolism. The sequence is that of Apolipoprotein C-IV (APOC4) from Aotus nancymaae (Ma's night monkey).